Here is a 344-residue protein sequence, read N- to C-terminus: Acetylpolyamine amidohydrolase 2 (344 aa).

His159 (proton donor/acceptor) is an active-site residue. Positions 195, 197, and 284 each coordinate Zn(2+).

The protein belongs to the histone deacetylase family. Homodimer. Zn(2+) serves as cofactor.

It carries out the reaction N-acetylputrescine + H2O = putrescine + acetate. The catalysed reaction is N-acetylcadaverine + H2O = cadaverine + acetate. Its pathway is amine and polyamine metabolism. In terms of biological role, catalyzes the deacetylation of acetylated polyamines such as N-acetylputrescine and N-acetylcadaverine. Plays an important role in the metabolism of acetylated polyamines in P.aeruginosa. Is involved in the degradation pathways of N-acetylputrescine and N-acetylcadaverine, that allow P.aeruginosa to utilize these acetylpolyamines as a carbon source under glucose starvation. Shows nearly no activity against N(1)-acetylspermine and N(1)-acetylspermidine. Can also hydrolyze artificial trifluoroacetylated lysine-derivative, and to a lesser extent, acetylated lysine-derivative. The sequence is that of Acetylpolyamine amidohydrolase 2 from Pseudomonas aeruginosa (strain ATCC 15692 / DSM 22644 / CIP 104116 / JCM 14847 / LMG 12228 / 1C / PRS 101 / PAO1).